Reading from the N-terminus, the 66-residue chain is MPKQKTHRASAKRFKRTGNGGLKRSNAYTSHRFHGKTKKQRRQLRKASMVSASDMKRIKQMLSQMK.

Basic residues-rich tracts occupy residues 1 to 16 (MPKQ…RFKR) and 31 to 45 (HRFH…RQLR). Residues 1–52 (MPKQKTHRASAKRFKRTGNGGLKRSNAYTSHRFHGKTKKQRRQLRKASMVSA) are disordered.

The protein belongs to the bacterial ribosomal protein bL35 family.

The chain is Large ribosomal subunit protein bL35 from Ligilactobacillus salivarius (strain UCC118) (Lactobacillus salivarius).